The following is a 722-amino-acid chain: Glycine--tRNA ligase beta subunit (722 aa).

The protein belongs to the class-II aminoacyl-tRNA synthetase family. Tetramer of two alpha and two beta subunits.

It is found in the cytoplasm. The catalysed reaction is tRNA(Gly) + glycine + ATP = glycyl-tRNA(Gly) + AMP + diphosphate. The polypeptide is Glycine--tRNA ligase beta subunit (glyS) (Xylella fastidiosa (strain 9a5c)).